The primary structure comprises 282 residues: Autophagy protein 5 (282 aa).

Residue K144 forms a Glycyl lysine isopeptide (Lys-Gly) (interchain with G-Cter in ATG12) linkage.

The protein belongs to the ATG5 family. Conjugated with ATG12. In terms of processing, conjugated to ATG12; which is essential for autophagy.

Its subcellular location is the preautophagosomal structure membrane. In terms of biological role, involved in cytoplasm to vacuole transport (Cvt) and autophagic vesicle formation. Autophagy is essential for maintenance of amino acid levels and protein synthesis under nitrogen starvation. Required for selective autophagic degradation of the nucleus (nucleophagy). Also required for mitophagy, which eliminates defective or superfluous mitochondria in order to fulfill cellular energy requirements and prevent excess ROS production. Conjugation with ATG12, through a ubiquitin-like conjugating system involving ATG7 as an E1-like activating enzyme and ATG10 as an E2-like conjugating enzyme, is essential for its function. The ATG12-ATG5 conjugate acts as an E3-like enzyme which is required for lipidation of ATG8 and ATG8 association to the vesicle membranes. In Scheffersomyces stipitis (strain ATCC 58785 / CBS 6054 / NBRC 10063 / NRRL Y-11545) (Yeast), this protein is Autophagy protein 5 (ATG5).